The primary structure comprises 101 residues: Small ribosomal subunit protein bS18c (101 aa).

Basic residues predominate over residues 1 to 19 (MDKSKQLFRKSKGSFRRRL). Positions 1–23 (MDKSKQLFRKSKGSFRRRLPPIG) are disordered.

Belongs to the bacterial ribosomal protein bS18 family. In terms of assembly, part of the 30S ribosomal subunit.

It localises to the plastid. The protein resides in the chloroplast. The chain is Small ribosomal subunit protein bS18c from Acorus gramineus (Dwarf sweet flag).